The chain runs to 582 residues: Protein NRT1/ PTR FAMILY 5.2 (582 aa).

A run of 11 helical transmembrane segments spans residues 77–97 (WVGT…ALLG), 100–120 (ITFV…TLSV), 141–161 (ASVL…IGTG), 189–209 (FFNW…TVLV), 217–237 (WTLG…IFLL), 334–354 (PVLF…TLFV), 370–390 (IPPA…IVLY), 408–428 (ITLL…MIVA), 452–472 (LPLT…ADSF), 493–515 (GTSY…LSTV), and 538–558 (YYYL…LVVV).

It belongs to the major facilitator superfamily. Proton-dependent oligopeptide transporter (POT/PTR) (TC 2.A.17) family. Expressed in roots. Detected in shoots, leaves and flowers.

It is found in the membrane. Its function is as follows. Peptide transporter involved in stress tolerance in seeds during germination and in defense against virulent bacterial pathogens. In Arabidopsis thaliana (Mouse-ear cress), this protein is Protein NRT1/ PTR FAMILY 5.2 (NPF5.2).